The sequence spans 336 residues: Phosphoribosylformylglycinamidine cyclo-ligase (336 aa).

Belongs to the AIR synthase family.

Its subcellular location is the cytoplasm. The enzyme catalyses 2-formamido-N(1)-(5-O-phospho-beta-D-ribosyl)acetamidine + ATP = 5-amino-1-(5-phospho-beta-D-ribosyl)imidazole + ADP + phosphate + H(+). Its pathway is purine metabolism; IMP biosynthesis via de novo pathway; 5-amino-1-(5-phospho-D-ribosyl)imidazole from N(2)-formyl-N(1)-(5-phospho-D-ribosyl)glycinamide: step 2/2. The polypeptide is Phosphoribosylformylglycinamidine cyclo-ligase (Thermoanaerobacter sp. (strain X514)).